The sequence spans 140 residues: Inner membrane protein YphA (140 aa).

Residues 1–13 (MNTLRYFDFGAAR) are Cytoplasmic-facing. Residues 14-34 (PVLLLIARIAVVLIFIIFGFP) traverse the membrane as a helical segment. Topologically, residues 35-56 (KMMGFDGTVQYMASLGAPMPML) are periplasmic. Residues 57 to 77 (AAIIAVVMEVPAAILIVLGFF) traverse the membrane as a helical segment. Topologically, residues 78–79 (TR) are cytoplasmic. Residues 80 to 100 (PLAVLFIFYTLGTAVIGHHYW) traverse the membrane as a helical segment. Residues 101-116 (DMTGDAVGPNMINFWK) lie on the Periplasmic side of the membrane. The chain crosses the membrane as a helical span at residues 117 to 137 (NVSIAGAFLLLAITGPGAISL). Residues 138 to 140 (DRR) are Cytoplasmic-facing.

The protein belongs to the DoxX family.

The protein localises to the cell inner membrane. This is Inner membrane protein YphA (yphA) from Escherichia coli (strain K12).